The sequence spans 299 residues: Ribosomal protein uL3 glutamine methyltransferase (299 aa).

Belongs to the protein N5-glutamine methyltransferase family. PrmB subfamily.

The catalysed reaction is L-glutaminyl-[ribosomal protein uL3] + S-adenosyl-L-methionine = N(5)-methyl-L-glutaminyl-[ribosomal protein uL3] + S-adenosyl-L-homocysteine + H(+). In terms of biological role, methylates large ribosomal subunit protein uL3 on a specific glutamine residue. The sequence is that of Ribosomal protein uL3 glutamine methyltransferase from Neisseria gonorrhoeae (strain ATCC 700825 / FA 1090).